The following is a 145-amino-acid chain: Antiholin-like protein LrgA (145 aa).

A run of 4 helical transmembrane segments spans residues 13–30 (FFHQ…SKII), 40–62 (GSVI…LGEV), 69–91 (LTNN…LGVI), and 95–117 (PFLI…GYVT).

It belongs to the CidA/LrgA family. LrgA subfamily.

It localises to the cell membrane. Inhibits the expression or activity of extracellular murein hydrolases by interacting, possibly with LrgB, with the holin-like proteins CidA and/or CidB. The LrgAB and CidAB proteins may affect the proton motive force of the membrane. May be involved in programmed cell death (PCD), possibly triggering PCD in response to antibiotics and environmental stresses. This is Antiholin-like protein LrgA from Staphylococcus aureus (strain MW2).